The following is a 632-amino-acid chain: RNA-binding post-transcriptional regulator csx1 (632 aa).

2 positions are modified to phosphoserine; by MAPK sty1: serine 42 and serine 54. Phosphoserine is present on residues serine 67 and serine 69. RRM domains follow at residues 85–167 (DTLW…WATG) and 182–261 (FSIF…VASP). Serine 291 carries the phosphoserine; by MAPK sty1 modification. In terms of domain architecture, RRM 3 spans 297-369 (TTVFVGGLAS…SHIRLAWGHN (73 aa)). Residue serine 455 is modified to Phosphoserine; by MAPK sty1. The disordered stretch occupies residues 456–476 (PPPLSRSASISPTLSGSGSGL). The segment covering 466 to 476 (SPTLSGSGSGL) has biased composition (low complexity).

As to quaternary structure, interacts with cip1 and cip2.

It localises to the cytoplasm. Functionally, regulates global gene expression after oxidative stress. Interacts and stabilizes atf1 and pcr1 mRNAs after oxidative stress, thus controlling their turnover. This chain is RNA-binding post-transcriptional regulator csx1 (csx1), found in Schizosaccharomyces pombe (strain 972 / ATCC 24843) (Fission yeast).